Here is a 1704-residue protein sequence, read N- to C-terminus: Arf-GAP with Rho-GAP domain, ANK repeat and PH domain-containing protein 2 (1704 aa).

An SAM domain is found at 6-70 (EVNVDIKDFL…LKQLQIILSK (65 aa)). Tyr77 is subject to Phosphotyrosine. The disordered stretch occupies residues 126–161 (NLEDSDASVERSQYPQSDDKLSPPKRDFPTAEEPHL). A compositionally biased stretch (basic and acidic residues) spans 142-160 (SDDKLSPPKRDFPTAEEPH). PH domains are found at residues 482-574 (KKVK…NALK) and 587-679 (TPEK…QSIA). Residues 676–811 (QSIAETLSDY…TLLASLTKEE (136 aa)) form the Arf-GAP domain. The C4-type zinc finger occupies 700-723 (CADCKAPDPDWASINLCVVICKKC). PH domains lie at 878–1003 (DIHS…KHFV) and 1014–1114 (DYDL…AGTD). In terms of domain architecture, Rho-GAP spans 1116–1297 (NALQDQQLSK…DLINNYVEIF (182 aa)). Positions 1326-1420 (GDLLIEVYVE…AYLVVKRFLT (95 aa)) constitute a Ras-associating domain. The region spanning 1434–1537 (GSIKEGILKI…WMTSIFIAQH (104 aa)) is the PH 5 domain. Residue Ser1632 is modified to Phosphoserine. The tract at residues 1636–1675 (LEDTEPEAPLGQPKGHKGLKTLRKTEDRNSKATLDSDHKL) is disordered. Residues 1658–1675 (RKTEDRNSKATLDSDHKL) are compositionally biased toward basic and acidic residues.

Detected in brain, thymus, lymph node, thyroid, spinal cord, trachea, heart, skeletal muscle, spleen, kidney, liver, placenta, lung and peripheral blood leukocytes.

The protein localises to the cytoplasm. Phosphatidylinositol 3,4,5-trisphosphate-dependent GTPase-activating protein that modulates actin cytoskeleton remodeling by regulating ARF and RHO family members. Is activated by phosphatidylinositol 3,4,5-trisphosphate (PtdIns(3,4,5)P3) binding. Can be activated by phosphatidylinositol 3,4-bisphosphate (PtdIns(3,4,5)P2) binding, albeit with lower efficiency. The chain is Arf-GAP with Rho-GAP domain, ANK repeat and PH domain-containing protein 2 (ARAP2) from Homo sapiens (Human).